A 638-amino-acid chain; its full sequence is LIM domain kinase 2 (638 aa).

2 LIM zinc-binding domains span residues 12–63 (CRGC…CHKD) and 72–124 (CHGC…CGKC). A PDZ domain is found at 152-239 (LISMPATTEC…TLQLLIEHDP (88 aa)). Phosphothreonine is present on Thr-210. The tract at residues 255–304 (PHMQSTGHTLMLSTLDTKENQEGTLRRRSLRRSNSISKSPGPSSPKEPLL) is disordered. The span at 257 to 269 (MQSTGHTLMLSTL) shows a compositional bias: polar residues. Residues 270 to 279 (DTKENQEGTL) are compositionally biased toward basic and acidic residues. The segment covering 286–304 (RSNSISKSPGPSSPKEPLL) has biased composition (low complexity). Phosphoserine is present on residues Ser-293 and Ser-298. A Protein kinase domain is found at 331 to 608 (LIHGEVLGKG…DSFEALSLFL (278 aa)). Residues 337–345 (LGKGFFGQA) and Lys-360 each bind ATP. Asp-451 is an active-site residue. Thr-505 is subject to Phosphothreonine; by ROCK1 and CDC42BP.

It belongs to the protein kinase superfamily. TKL Ser/Thr protein kinase family. In terms of assembly, binds ROCK1 and MARF1. Interacts with NISCH. Post-translationally, phosphorylated on serine and/or threonine residues by ROCK1. In terms of tissue distribution, specifically expressed in the testes.

Its subcellular location is the cytoplasm. It is found in the cytoskeleton. It localises to the spindle. The protein localises to the microtubule organizing center. The protein resides in the centrosome. Its subcellular location is the nucleus. It is found in the perinuclear region. It carries out the reaction L-seryl-[protein] + ATP = O-phospho-L-seryl-[protein] + ADP + H(+). It catalyses the reaction L-threonyl-[protein] + ATP = O-phospho-L-threonyl-[protein] + ADP + H(+). Its function is as follows. Serine/threonine-protein kinase that plays an essential role in the regulation of actin filament dynamics. Acts downstream of several Rho family GTPase signal transduction pathways. Involved in astral microtubule organization and mitotic spindle orientation during early stages of mitosis by mediating phosphorylation of TPPP. Displays serine/threonine-specific phosphorylation of myelin basic protein and histone (MBP) in vitro. Suppresses ciliogenesis via multiple pathways; phosphorylation of CFL1, suppression of directional trafficking of ciliary vesicles to the ciliary base, and by facilitating YAP1 nuclear localization where it acts as a transcriptional corepressor of the TEAD4 target genes AURKA and PLK1. The polypeptide is LIM domain kinase 2 (Limk2) (Mus musculus (Mouse)).